A 632-amino-acid chain; its full sequence is tRNA uridine 5-carboxymethylaminomethyl modification enzyme MnmG (632 aa).

FAD-binding positions include G15–G20, I127, and S182. G276 to F290 lines the NAD(+) pocket. An FAD-binding site is contributed by Q373.

The protein belongs to the MnmG family. Homodimer. Heterotetramer of two MnmE and two MnmG subunits. It depends on FAD as a cofactor.

The protein resides in the cytoplasm. NAD-binding protein involved in the addition of a carboxymethylaminomethyl (cmnm) group at the wobble position (U34) of certain tRNAs, forming tRNA-cmnm(5)s(2)U34. In Streptococcus pyogenes serotype M18 (strain MGAS8232), this protein is tRNA uridine 5-carboxymethylaminomethyl modification enzyme MnmG.